A 452-amino-acid polypeptide reads, in one-letter code: tRNA modification GTPase MnmE (452 aa).

(6S)-5-formyl-5,6,7,8-tetrahydrofolate-binding residues include Arg25, Glu81, and Lys120. A TrmE-type G domain is found at 216-375 (GITVVIAGEP…LKNHLKNTAG (160 aa)). Asn226 serves as a coordination point for K(+). Residues 226–231 (NVGKSS), 245–251 (TDIAGTT), and 270–273 (DTAG) each bind GTP. Mg(2+) is bound at residue Ser230. Residues Thr245, Ile247, and Thr250 each contribute to the K(+) site. A Mg(2+)-binding site is contributed by Thr251. Lys452 serves as a coordination point for (6S)-5-formyl-5,6,7,8-tetrahydrofolate.

It belongs to the TRAFAC class TrmE-Era-EngA-EngB-Septin-like GTPase superfamily. TrmE GTPase family. As to quaternary structure, homodimer. Heterotetramer of two MnmE and two MnmG subunits. K(+) serves as cofactor.

The protein localises to the cytoplasm. In terms of biological role, exhibits a very high intrinsic GTPase hydrolysis rate. Involved in the addition of a carboxymethylaminomethyl (cmnm) group at the wobble position (U34) of certain tRNAs, forming tRNA-cmnm(5)s(2)U34. The polypeptide is tRNA modification GTPase MnmE (Coxiella burnetii (strain Dugway 5J108-111)).